Reading from the N-terminus, the 500-residue chain is Putative beta-lactamase-like 1 (500 aa).

The protein belongs to the beta-lactamase family.

The polypeptide is Putative beta-lactamase-like 1 (LACTBL1) (Homo sapiens (Human)).